Here is a 200-residue protein sequence, read N- to C-terminus: uncharacterized protein (200 aa).

This is an uncharacterized protein from Haemophilus phage HP1 (strain HP1c1) (Bacteriophage HP1).